We begin with the raw amino-acid sequence, 737 residues long: Phosphoribosylformylglycinamidine synthase subunit PurL (737 aa).

His50 is a catalytic residue. Residues Tyr53 and Lys92 each coordinate ATP. Glu94 contacts Mg(2+). Residues 95 to 98 and Arg117 each bind substrate; that span reads SHNH. His96 (proton acceptor) is an active-site residue. Residue Asp118 coordinates Mg(2+). Gln241 is a binding site for substrate. Asp269 lines the Mg(2+) pocket. 313-315 lines the substrate pocket; the sequence is ESQ. ATP-binding residues include Asp495 and Gly532. A Mg(2+)-binding site is contributed by Asn533. Residue Ser535 coordinates substrate.

It belongs to the FGAMS family. In terms of assembly, monomer. Part of the FGAM synthase complex composed of 1 PurL, 1 PurQ and 2 PurS subunits.

It is found in the cytoplasm. It catalyses the reaction N(2)-formyl-N(1)-(5-phospho-beta-D-ribosyl)glycinamide + L-glutamine + ATP + H2O = 2-formamido-N(1)-(5-O-phospho-beta-D-ribosyl)acetamidine + L-glutamate + ADP + phosphate + H(+). Its pathway is purine metabolism; IMP biosynthesis via de novo pathway; 5-amino-1-(5-phospho-D-ribosyl)imidazole from N(2)-formyl-N(1)-(5-phospho-D-ribosyl)glycinamide: step 1/2. Its function is as follows. Part of the phosphoribosylformylglycinamidine synthase complex involved in the purines biosynthetic pathway. Catalyzes the ATP-dependent conversion of formylglycinamide ribonucleotide (FGAR) and glutamine to yield formylglycinamidine ribonucleotide (FGAM) and glutamate. The FGAM synthase complex is composed of three subunits. PurQ produces an ammonia molecule by converting glutamine to glutamate. PurL transfers the ammonia molecule to FGAR to form FGAM in an ATP-dependent manner. PurS interacts with PurQ and PurL and is thought to assist in the transfer of the ammonia molecule from PurQ to PurL. This Bartonella bacilliformis (strain ATCC 35685 / KC583 / Herrer 020/F12,63) protein is Phosphoribosylformylglycinamidine synthase subunit PurL.